The primary structure comprises 344 residues: UDP-glycosyltransferase 73C4 (344 aa).

Residues Ser145, 202–203 (WA), 220–228 (HCGWNSSLE), and 242–245 (FAEQ) each bind UDP-alpha-D-glucose.

This sequence belongs to the UDP-glycosyltransferase family. Expressed in flowers and fruits.

It localises to the cytoplasm. The protein localises to the nucleus. Probable glucosyltransferase that cannot glycosylate abscisic acid (ABA) and auxin (IAA). This Solanum lycopersicum (Tomato) protein is UDP-glycosyltransferase 73C4.